We begin with the raw amino-acid sequence, 336 residues long: Glutamyl endopeptidase (336 aa).

A signal peptide spans 1 to 29 (MKGKFLKVSSLFVATLTTATLVSSPAANA). Positions 30-68 (LSSKAMDNHPQQTQSSKQQTPKIQKGGNLKPLEQREHAN) are excised as a propeptide. The tract at residues 34 to 61 (AMDNHPQQTQSSKQQTPKIQKGGNLKPL) is disordered. The span at 39–51 (PQQTQSSKQQTPK) shows a compositional bias: low complexity. Residues His-119, Asp-161, and Ser-237 each act as charge relay system in the active site. The segment at 283–336 (FANDDQPNNPDNPDNPNNPDNPNNPDEPNNPDNPNNPDNPDNGDTNNSDNPDAA) is disordered. Positions 286–336 (DDQPNNPDNPDNPNNPDNPNNPDEPNNPDNPNNPDNPDNGDTNNSDNPDAA) are enriched in low complexity. A run of 11 repeats spans residues 289-291 (PNN), 292-294 (PDN), 295-297 (PDN), 298-300 (PNN), 301-303 (PDN), 304-306 (PNN), 310-312 (PNN), 313-315 (PDN), 316-318 (PNN), 319-321 (PDN), and 322-324 (PDN). The interval 289–324 (PNNPDNPDNPNNPDNPNNPDEPNNPDNPNNPDNPDN) is 11 X 3 AA repeats of P-[DN]-N.

The protein belongs to the peptidase S1B family. In terms of processing, proteolytically cleaved by aureolysin (aur). This cleavage leads to the activation of SspA.

The protein resides in the secreted. It carries out the reaction Preferential cleavage: Glu-|-Xaa, Asp-|-Xaa.. Functionally, preferentially cleaves peptide bonds on the carboxyl-terminal side of aspartate and glutamate. Along with other extracellular proteases it is involved in colonization and infection of human tissues. Required for proteolytic maturation of thiol protease SspB and inactivation of SspC, an inhibitor of SspB. It is the most important protease for degradation of fibronectin-binding protein (FnBP) and surface protein A, which are involved in adherence to host cells. May also protect bacteria against host defense mechanism by cleaving the immunoglobulin classes IgG, IgA and IgM. May be involved in the stability of secreted lipases. The polypeptide is Glutamyl endopeptidase (sspA) (Staphylococcus aureus (strain COL)).